The chain runs to 250 residues: Probable replication-associated protein repA2 (250 aa).

Belongs to the IncFII RepA family.

Functionally, this protein is essential for plasmid replication; it is involved in copy control functions. The polypeptide is Probable replication-associated protein repA2 (repA2) (Buchnera aphidicola subsp. Schizaphis graminum (strain Sg)).